Here is a 449-residue protein sequence, read N- to C-terminus: MNTLTAPLPMATDALSQFGHDAWWVIGLKAVLILVVLLLLTLFNIWFERRVVGRMQHRPGPNVNGPFGLLQSLADALKLIFKEGIIPKAADKAVYLIAPVIAVIPSFITFSVIPFGPEVTIPFTDTRTPLQLTDMPVAVLFVMAIASIGIYGIVLGGWSSGSTYSLLGGLRSSAQMISYEVAMGLALVAVFLYAGSMSTSEIVAAQDNLWYGLILVPSFVIYLIAMVGETNRAPFDLPEAEGELVGGFHTEYSSMTFALFFLAEYINMATVSAVATTLFLGGWHAPFWLDHAWAGANEGYWPLLWFLGKVLFFVFIFIWLRGTLPRLRYDQFMAFGWKRLIPVALVWIVAVATIRSISLDGGVDRRYLLIGIGALAVVFLVLFFIGGAAEEQPTTVPEAAPAGGYPVPPMPAGGPVRGAAVPLTFDRSSPIASSMPQPSAATRSAGEEI.

A run of 9 helical transmembrane segments spans residues 23-43, 93-113, 137-157, 176-196, 209-229, 258-280, 300-320, 332-352, and 368-388; these read WWVIGLKAVLILVVLLLLTLF, AVYLIAPVIAVIPSFITFSVI, VAVLFVMAIASIGIYGIVLGG, MISYEVAMGLALVAVFLYAGS, LWYGLILVPSFVIYLIAMVGE, ALFFLAEYINMATVSAVATTLFL, YWPLLWFLGKVLFFVFIFIWL, FMAFGWKRLIPVALVWIVAVA, and LLIGIGALAVVFLVLFFIGGA. A compositionally biased stretch (polar residues) spans 427-442; the sequence is RSSPIASSMPQPSAAT. Residues 427–449 form a disordered region; the sequence is RSSPIASSMPQPSAATRSAGEEI.

Belongs to the complex I subunit 1 family. NDH-1 is composed of 14 different subunits. Subunits NuoA, H, J, K, L, M, N constitute the membrane sector of the complex.

The protein resides in the cell membrane. It carries out the reaction a quinone + NADH + 5 H(+)(in) = a quinol + NAD(+) + 4 H(+)(out). NDH-1 shuttles electrons from NADH, via FMN and iron-sulfur (Fe-S) centers, to quinones in the respiratory chain. The immediate electron acceptor for the enzyme in this species is believed to be ubiquinone. Couples the redox reaction to proton translocation (for every two electrons transferred, four hydrogen ions are translocated across the cytoplasmic membrane), and thus conserves the redox energy in a proton gradient. This subunit may bind ubiquinone. In Nocardioides sp. (strain ATCC BAA-499 / JS614), this protein is NADH-quinone oxidoreductase subunit H.